The sequence spans 707 residues: Choline transporter-like protein 4 (707 aa).

Residues 1-33 (MGGKQDQDKEAYGKPAKYDPSFRGPIRNRSCTD) are Cytoplasmic-facing. Residues 34 to 54 (IICCVLFFLFILGYIAVGILA) form a helical membrane-spanning segment. Residues 55–227 (WVYGDPKQVL…KIFEDFAQSW (173 aa)) are Extracellular-facing. Residues Asn-68, Asn-185, and Asn-196 are each glycosylated (N-linked (GlcNAc...) asparagine). Residues 228–248 (YWILIALGLALVLSLLFILLL) traverse the membrane as a helical segment. Over 249–250 (RL) the chain is Cytoplasmic. A helical transmembrane segment spans residues 251-271 (VAGPLVFVLIIGVLGVLAYGI). At 272–307 (YHCWEEYRVLRDKGASISQLGFTTNLSAYRNVQETW) the chain is on the extracellular side. N-linked (GlcNAc...) asparagine glycosylation is present at Asn-296. The chain crosses the membrane as a helical span at residues 308-328 (LAALIILAVLEGVLLLMLIFL). At 329 to 356 (RQRICIAIALLKEASRAVGYIMSTMFYP) the chain is on the cytoplasmic side. A helical membrane pass occupies residues 357 to 377 (LVTFALLLVCIAYWAIIALFL). Topologically, residues 378 to 452 (ATSGQPQYVF…AVLGLFWTIN (75 aa)) are extracellular. N-linked (GlcNAc...) asparagine glycans are attached at residues Asn-391, Asn-403, and Asn-413. Residues 453-473 (WVLALGQCVLAGAFASFYWAF) form a helical membrane-spanning segment. The Cytoplasmic portion of the chain corresponds to 474–498 (HKPRDIPTFPLGSAFLRTLRYHTGS). Residues 499–519 (LAFGALILTLVQIARVILEYI) traverse the membrane as a helical segment. The Extracellular portion of the chain corresponds to 520-557 (DHKLRGAQNPLTRCILCCFKCCLWCLEKFIKFLNRNAY). A helical transmembrane segment spans residues 558–578 (IMIAIYGKNFCVSAKNAFMLL). The Cytoplasmic segment spans residues 579-594 (MRNIVRVVVLDKVTDL). A helical membrane pass occupies residues 595–615 (LLFFGKLLVVGGVGVLSFFFF). The Extracellular segment spans residues 616-635 (TGRIPSLGKTFENPQLNYYW). The chain crosses the membrane as a helical span at residues 636–656 (LPIMVSILGAYLIASGFFSVF). Topologically, residues 657–707 (GMCVDTLFLCFLEDLERNDGSADRPYYMSKSLLKILGKKNKGTPGDKKRKK) are cytoplasmic.

It belongs to the CTL (choline transporter-like) family. In terms of processing, N-glycosylated; N-glycosylation of Asn-68 and Asn-391 is required for a proper thiamine pyrophosphate uptake.

It is found in the membrane. It localises to the apical cell membrane. The enzyme catalyses choline(out) + n H(+)(in) = choline(in) + n H(+)(out). It catalyses the reaction thiamine diphosphate(out) = thiamine diphosphate(in). Its function is as follows. Choline transporter that plays a role in the choline-acetylcholine system and is required to the efferent innervation of hair cells in the olivocochlear bundle for the maintenance of physiological function of outer hair cells and the protection of hair cells from acoustic injury. Also described as a thiamine pyrophosphate transporter in colon, may mediate the absorption of microbiota-generated thiamine pyrophosphate and contribute to host thiamine (vitamin B1) homeostasis. This chain is Choline transporter-like protein 4, found in Bos taurus (Bovine).